A 601-amino-acid chain; its full sequence is MSDPTASPLIWRDDGMPQSALYGDVYFSSADGLAETRAVFLAGCDLPAAWAGRDHFTVGELGFGTGLNIAALLDLWRREKAPHSMQGGQRLHIFSIEAHPITRDEAARALAVWPELGEAASVLLDHWPGLARGFHRIDLPGFDATFDLAVMDVEPALAAWDGAADAWFLDGFSPALNPAMWREEILAAVAARSAPGARAATFTVAGAVRRGLSAAGFQVDRRPGFGRKKQRLEAVAPGVAASPPRPRRLAVIGGGIAGAAMARAARAEGLEAMMFDDGQAPASGNPAALVTPALDAGGGPRAALPAQAFARAAALYEALPEAVIARGALKLSVVPRDEARHAAVADQDLFEPGTMAVLDAATATARLGEPVGEALSMSQALVVEPARVLDAWRGEVIDAQVARLAHEDGVWRLLGSDDQLLAEVDAVVLAGGAGQARLWPDAPLRPIRGQTSWTDRPLAFPTPAAFGGYVAPTRDGMLFGATHDRDDVGTDARAEDDRRNLRALAEGLPKLAASLADAPLRGRAAVRATTADHLPVAGAVPGAAPGLFVLGGLGGRGFCLAPLLAEHLAARILALPSPLPRPLSALVEPGRFSSRVATGAV.

The tract at residues 1 to 237 (MSDPTASPLI…KKQRLEAVAP (237 aa)) is tRNA (mnm(5)s(2)U34)-methyltransferase. The FAD-dependent cmnm(5)s(2)U34 oxidoreductase stretch occupies residues 252–601 (IGGGIAGAAM…FSSRVATGAV (350 aa)).

In the N-terminal section; belongs to the methyltransferase superfamily. tRNA (mnm(5)s(2)U34)-methyltransferase family. It in the C-terminal section; belongs to the DAO family. FAD is required as a cofactor.

It localises to the cytoplasm. It carries out the reaction 5-aminomethyl-2-thiouridine(34) in tRNA + S-adenosyl-L-methionine = 5-methylaminomethyl-2-thiouridine(34) in tRNA + S-adenosyl-L-homocysteine + H(+). In terms of biological role, catalyzes the last two steps in the biosynthesis of 5-methylaminomethyl-2-thiouridine (mnm(5)s(2)U) at the wobble position (U34) in tRNA. Catalyzes the FAD-dependent demodification of cmnm(5)s(2)U34 to nm(5)s(2)U34, followed by the transfer of a methyl group from S-adenosyl-L-methionine to nm(5)s(2)U34, to form mnm(5)s(2)U34. This Caulobacter sp. (strain K31) protein is tRNA 5-methylaminomethyl-2-thiouridine biosynthesis bifunctional protein MnmC.